The following is a 512-amino-acid chain: Pantetheinase (512 aa).

An N-terminal signal peptide occupies residues 1–23; the sequence is MGMSWWLACAAAFSALCVLKASS. The CN hydrolase domain maps to 32 to 308; that stretch reads YEHAVILPKD…GKLLFAQLKS (277 aa). Catalysis depends on glutamate 81, which acts as the Proton acceptor. Residues asparagine 132 and asparagine 148 are each glycosylated (N-linked (GlcNAc...) asparagine). Catalysis depends on lysine 180, which acts as the Proton donor. Catalysis depends on cysteine 213, which acts as the Nucleophile. Asparagine 316 and asparagine 354 each carry an N-linked (GlcNAc...) asparagine glycan. Asparagine 488 carries the GPI-anchor amidated asparagine lipid modification. The propeptide at 489 to 512 is removed in mature form; that stretch reads ASSDFIAHSLIIMLIVTPIIHYLC.

It belongs to the carbon-nitrogen hydrolase superfamily. BTD/VNN family. In terms of assembly, monomer. In terms of processing, N-glycosylated. As to expression, detected in kidney (at protein level). Ubiquitous.

Its subcellular location is the cell membrane. It catalyses the reaction (R)-pantetheine + H2O = cysteamine + (R)-pantothenate. Amidohydrolase that hydrolyzes specifically one of the carboamide linkages in D-pantetheine thus recycling pantothenic acid (vitamin B5) and releasing cysteamine. This is Pantetheinase (Vnn1) from Mus musculus (Mouse).